Reading from the N-terminus, the 147-residue chain is UPF0178 protein AFE_3267 (147 aa).

Belongs to the UPF0178 family.

The sequence is that of UPF0178 protein AFE_3267 from Acidithiobacillus ferrooxidans (strain ATCC 23270 / DSM 14882 / CIP 104768 / NCIMB 8455) (Ferrobacillus ferrooxidans (strain ATCC 23270)).